A 149-amino-acid polypeptide reads, in one-letter code: D-aminoacyl-tRNA deacylase (149 aa).

The short motif at 137 to 138 (GP) is the Gly-cisPro motif, important for rejection of L-amino acids element.

This sequence belongs to the DTD family. Homodimer.

The protein localises to the cytoplasm. The catalysed reaction is glycyl-tRNA(Ala) + H2O = tRNA(Ala) + glycine + H(+). The enzyme catalyses a D-aminoacyl-tRNA + H2O = a tRNA + a D-alpha-amino acid + H(+). In terms of biological role, an aminoacyl-tRNA editing enzyme that deacylates mischarged D-aminoacyl-tRNAs. Also deacylates mischarged glycyl-tRNA(Ala), protecting cells against glycine mischarging by AlaRS. Acts via tRNA-based rather than protein-based catalysis; rejects L-amino acids rather than detecting D-amino acids in the active site. By recycling D-aminoacyl-tRNA to D-amino acids and free tRNA molecules, this enzyme counteracts the toxicity associated with the formation of D-aminoacyl-tRNA entities in vivo and helps enforce protein L-homochirality. In Clostridium botulinum (strain Eklund 17B / Type B), this protein is D-aminoacyl-tRNA deacylase.